Consider the following 425-residue polypeptide: Histone-binding protein RBBP7 (425 aa).

Residue Ala2 is modified to N-acetylalanine. Ser3 carries the phosphoserine modification. The residue at position 4 (Lys4) is an N6-acetyllysine; alternate. A Glycyl lysine isopeptide (Lys-Gly) (interchain with G-Cter in SUMO2); alternate cross-link involves residue Lys4. Residue Lys4 forms a Glycyl lysine isopeptide (Lys-Gly) (interchain with G-Cter in ubiquitin); alternate linkage. Thr10 carries the phosphothreonine modification. WD repeat units lie at residues 47–122, 128–173, 181–217, 228–269, 275–312, 318–369, and 376–403; these read QWLP…KINH, RARY…LRLR, GLSW…KIVD, VVED…HLVD, VNCL…LHTF, EIFQ…LFIH, and ISDF…IWQM. Residue Ser95 is modified to Phosphoserine. A Glycyl lysine isopeptide (Lys-Gly) (interchain with G-Cter in SUMO2) cross-link involves residue Lys101. Position 119 is an N6-acetyllysine (Lys119). Lys155 participates in a covalent cross-link: Glycyl lysine isopeptide (Lys-Gly) (interchain with G-Cter in SUMO2). At Lys159 the chain carries N6-acetyllysine; alternate. Lys159 is covalently cross-linked (Glycyl lysine isopeptide (Lys-Gly) (interchain with G-Cter in SUMO2); alternate). The residue at position 354 (Ser354) is a Phosphoserine.

This sequence belongs to the WD repeat RBAP46/RBAP48/MSI1 family. In terms of assembly, binds directly to helix 1 of the histone fold of histone H4, a region that is not accessible when H4 is in chromatin. Subunit of the type B histone acetyltransferase (HAT) complex, composed of RBBP7 and HAT1. Subunit of the core histone deacetylase (HDAC) complex, which is composed of HDAC1, HDAC2, RBBP4 and RBBP7. The core HDAC complex associates with SIN3A, ARID4B/SAP180, SAP18, SAP30, SAP130, SUDS3/SAP45 and possibly ARID4A/RBP1 and ING1 to form the SIN3 HDAC complex. Component of the nucleosome remodeling and deacetylase (NuRD) repressor complex, composed of core proteins MTA1, MTA2, MTA3, RBBP4, RBBP7, HDAC1, HDAC2, MBD2, MBD3, and peripherally associated proteins CDK2AP1, CDK2AP2, GATAD2A, GATAD2B, CHD3, CHD4 and CHD5. The exact stoichiometry of the NuRD complex is unknown, and some subunits such as MBD2 and MBD3, GATAD2A and GATAD2B, and CHD3, CHD4 and CHD5 define mutually exclusive NuRD complexes. The NuRD complex may interact with MBD3L1. The NuRD complex may interact with MBD3L2. Subunit of the PRC2/EED-EZH2 complex, which is composed of at least EED, EZH2, RBBP4, RBBP7 and SUZ12. The PRC2/EED-EZH2 complex may also associate with HDAC1. Component of the NURF-1 ISWI chromatin remodeling complex (also called the nucleosome-remodeling factor (NURF) complex) at least composed of SMARCA1, BPTF, RBBP4 and RBBP7. Within the complex interacts with SMARCA1. Component of the BPFT-SMARCA1 complex at least composed of SMARCA1, BPFT, RBBP4 and RBBP7; the complex is catalytically inactive and does not remodel chromatin. Within the complex interacts with SMARCA1. Interacts with BRCA1. Interacts with CDK2AP1. Interacts with CENPA. Interacts with CHD3. Interacts with CHD4. Interacts with CREBBP, and this interaction may be enhanced by the binding of phosphorylated CREB1 to CREBBP. Interacts with HDAC7. Interacts with MTA1. Interacts with PWWP2B. Interacts with RB1 (via viral protein-binding domain). Interacts with SUV39H1. As to expression, higher levels in brain, thymus, lung, spleen, kidney, testis, and ovary/uterus; lower levels in heart, liver, and muscle.

Its subcellular location is the nucleus. In terms of biological role, core histone-binding subunit that may target chromatin remodeling factors, histone acetyltransferases and histone deacetylases to their histone substrates in a manner that is regulated by nucleosomal DNA. Component of several complexes which regulate chromatin metabolism. These include the type B histone acetyltransferase (HAT) complex, which is required for chromatin assembly following DNA replication; the core histone deacetylase (HDAC) complex, which promotes histone deacetylation and consequent transcriptional repression; the nucleosome remodeling and histone deacetylase complex (the NuRD complex), which promotes transcriptional repression by histone deacetylation and nucleosome remodeling; and the PRC2/EED-EZH2 complex, which promotes repression of homeotic genes during development; and the NURF (nucleosome remodeling factor) complex. This is Histone-binding protein RBBP7 (Rbbp7) from Mus musculus (Mouse).